The sequence spans 474 residues: Proline--tRNA ligase (474 aa).

Belongs to the class-II aminoacyl-tRNA synthetase family. ProS type 3 subfamily. Homodimer.

Its subcellular location is the cytoplasm. It carries out the reaction tRNA(Pro) + L-proline + ATP = L-prolyl-tRNA(Pro) + AMP + diphosphate. Its function is as follows. Catalyzes the attachment of proline to tRNA(Pro) in a two-step reaction: proline is first activated by ATP to form Pro-AMP and then transferred to the acceptor end of tRNA(Pro). This chain is Proline--tRNA ligase, found in Aster yellows witches'-broom phytoplasma (strain AYWB).